Reading from the N-terminus, the 279-residue chain is Oxygen-dependent coproporphyrinogen-III oxidase (279 aa).

S102 is a binding site for substrate. A divalent metal cation contacts are provided by H106 and H116. Residue H116 is the Proton donor of the active site. 118–120 (NTR) contributes to the substrate binding site. Residues H149 and H179 each contribute to the a divalent metal cation site. An important for dimerization region spans residues 244-279 (YVEFNLLYDRGTKFGLMTDGNVEAILMSLPPEVKFN).

This sequence belongs to the aerobic coproporphyrinogen-III oxidase family. As to quaternary structure, homodimer. A divalent metal cation serves as cofactor.

It is found in the cytoplasm. The enzyme catalyses coproporphyrinogen III + O2 + 2 H(+) = protoporphyrinogen IX + 2 CO2 + 2 H2O. The protein operates within porphyrin-containing compound metabolism; protoporphyrin-IX biosynthesis; protoporphyrinogen-IX from coproporphyrinogen-III (O2 route): step 1/1. Involved in the heme biosynthesis. Catalyzes the aerobic oxidative decarboxylation of propionate groups of rings A and B of coproporphyrinogen-III to yield the vinyl groups in protoporphyrinogen-IX. The protein is Oxygen-dependent coproporphyrinogen-III oxidase of Rickettsia conorii (strain ATCC VR-613 / Malish 7).